A 491-amino-acid chain; its full sequence is MSETKRVRVRYAPSPTGFLHIGNARTALFNYLFARHNDGDFIIRIEDTDAKRNIADGEESQMTNLKWLGMDWDEGVDVPGKYGPYRQSERQSIYEPLIQELLDKDLAYKCYCTEEELDAEREKQKANGEMPRYSGKCRHLTKEQQAEKEAQGFKPSIRFKVPANETITFNDMVKDDVSFESNGIGDFVIAKKDGIPTYNFAVAVDDHLMEISHVLRGDDHISNTPKQILIYNAFGWEPPIFGHMTLIVNESRRKLSKRDGSIIQFIEQYRDLGYLPEALFNFIAMLGWSPEGEEEIFSKEEFIKMFDPKRLSKSPALFDNVKLTWVNNQYVKKLPLNDVVELSLPHLQKAGVVSAELNQAELDWVHKLVSLYHEQMSYGAEIVPLSEMFFADAESITFDEEETAVLAEETVPTVISAFKKELEALEVLEAAEVKAAIKRVQKETGVKGKGLFMPIRIVTTGEMHGPELPLAIEVLGREKVLNRLDTWLKNN.

The short motif at 13-23 is the 'HIGH' region element; sequence PSPTGFLHIGN. Cysteine 110, cysteine 112, cysteine 137, and histidine 139 together coordinate Zn(2+). Residues 254 to 258 carry the 'KMSKS' region motif; it reads KLSKR. Lysine 257 is a binding site for ATP.

It belongs to the class-I aminoacyl-tRNA synthetase family. Glutamate--tRNA ligase type 1 subfamily. In terms of assembly, monomer. Requires Zn(2+) as cofactor.

The protein resides in the cytoplasm. It carries out the reaction tRNA(Glu) + L-glutamate + ATP = L-glutamyl-tRNA(Glu) + AMP + diphosphate. Catalyzes the attachment of glutamate to tRNA(Glu) in a two-step reaction: glutamate is first activated by ATP to form Glu-AMP and then transferred to the acceptor end of tRNA(Glu). The protein is Glutamate--tRNA ligase of Listeria monocytogenes serovar 1/2a (strain ATCC BAA-679 / EGD-e).